Consider the following 298-residue polypeptide: Diphthine methyl ester synthase (298 aa).

S-adenosyl-L-methionine is bound by residues Leu-9, Asp-85, Gly-88, 113–114 (SV), Leu-164, Leu-222, and His-247.

Belongs to the diphthine synthase family.

It localises to the cytoplasm. The enzyme catalyses 2-[(3S)-amino-3-carboxypropyl]-L-histidyl-[translation elongation factor 2] + 4 S-adenosyl-L-methionine = diphthine methyl ester-[translation elongation factor 2] + 4 S-adenosyl-L-homocysteine + 3 H(+). The protein operates within protein modification; peptidyl-diphthamide biosynthesis. In terms of biological role, S-adenosyl-L-methionine-dependent methyltransferase that catalyzes four methylations of the modified target histidine residue in translation elongation factor 2 (EF-2), to form an intermediate called diphthine methyl ester. The four successive methylation reactions represent the second step of diphthamide biosynthesis. This chain is Diphthine methyl ester synthase (DPH5), found in Kluyveromyces lactis (strain ATCC 8585 / CBS 2359 / DSM 70799 / NBRC 1267 / NRRL Y-1140 / WM37) (Yeast).